Here is a 309-residue protein sequence, read N- to C-terminus: F-box/LRR-repeat protein At3g48880 (309 aa).

Residues 10–57 (LRRWEELDTDILVRIFQKFSVFELTSGLAHVCRGWRAACCDPILWKTV) enclose the F-box domain. LRR repeat units lie at residues 77 to 107 (VERR…IFHF), 108 to 133 (NLFL…VLPA), 159 to 184 (SIAN…KIMG), and 208 to 233 (CSAI…NISH).

The protein is F-box/LRR-repeat protein At3g48880 of Arabidopsis thaliana (Mouse-ear cress).